The following is a 615-amino-acid chain: 1-deoxy-D-xylulose-5-phosphate synthase (615 aa).

Thiamine diphosphate is bound by residues histidine 72 and 111–113; that span reads GHS. Residue aspartate 142 participates in Mg(2+) binding. Thiamine diphosphate contacts are provided by residues 143-144, asparagine 171, tyrosine 278, and glutamate 360; that span reads GA. A Mg(2+)-binding site is contributed by asparagine 171.

This sequence belongs to the transketolase family. DXPS subfamily. In terms of assembly, homodimer. Mg(2+) serves as cofactor. It depends on thiamine diphosphate as a cofactor.

It catalyses the reaction D-glyceraldehyde 3-phosphate + pyruvate + H(+) = 1-deoxy-D-xylulose 5-phosphate + CO2. Its pathway is metabolic intermediate biosynthesis; 1-deoxy-D-xylulose 5-phosphate biosynthesis; 1-deoxy-D-xylulose 5-phosphate from D-glyceraldehyde 3-phosphate and pyruvate: step 1/1. Catalyzes the acyloin condensation reaction between C atoms 2 and 3 of pyruvate and glyceraldehyde 3-phosphate to yield 1-deoxy-D-xylulose-5-phosphate (DXP). This Campylobacter jejuni subsp. jejuni serotype O:6 (strain 81116 / NCTC 11828) protein is 1-deoxy-D-xylulose-5-phosphate synthase.